The following is a 329-amino-acid chain: Biotin synthase (329 aa).

In terms of domain architecture, Radical SAM core spans 38-262; it reads NTIQVSTLLS…IMPYSYIRLS (225 aa). C53, C57, and C60 together coordinate [4Fe-4S] cluster. [2Fe-2S] cluster is bound by residues C97, C128, C188, and R260.

Belongs to the radical SAM superfamily. Biotin synthase family. Homodimer. [4Fe-4S] cluster is required as a cofactor. The cofactor is [2Fe-2S] cluster.

It carries out the reaction (4R,5S)-dethiobiotin + (sulfur carrier)-SH + 2 reduced [2Fe-2S]-[ferredoxin] + 2 S-adenosyl-L-methionine = (sulfur carrier)-H + biotin + 2 5'-deoxyadenosine + 2 L-methionine + 2 oxidized [2Fe-2S]-[ferredoxin]. The protein operates within cofactor biosynthesis; biotin biosynthesis; biotin from 7,8-diaminononanoate: step 2/2. Its function is as follows. Catalyzes the conversion of dethiobiotin (DTB) to biotin by the insertion of a sulfur atom into dethiobiotin via a radical-based mechanism. The protein is Biotin synthase of Acinetobacter baylyi (strain ATCC 33305 / BD413 / ADP1).